The following is an 821-amino-acid chain: DNA replication licensing factor MCM6 (821 aa).

The residue at position 1 (methionine 1) is an N-acetylmethionine. Serine 13, serine 219, and serine 271 each carry phosphoserine. Phosphothreonine is present on threonine 278. The 208-residue stretch at 346 to 553 (LYHNLCTSLF…TDYAIARRIV (208 aa)) folds into the MCM domain. ATP contacts are provided by histidine 359, serine 399, threonine 400, alanine 401, lysine 402, serine 403, and asparagine 504. The Arginine finger signature appears at 528–531 (SRFD). 2 residues coordinate ADP: arginine 619 and glutamate 622. Residue lysine 643 is modified to N6-acetyllysine. Positions 676–708 (TDEGQGGVNGHADSPAPVNRFNGSSEDASQETV) are disordered. Phosphoserine occurs at positions 689, 704, and 762. Residues 696 to 708 (FNGSSEDASQETV) show a composition bias toward polar residues. Threonine 791 carries the phosphothreonine modification.

Belongs to the MCM family. In terms of assembly, component of the MCM2-7 complex. The complex forms a toroidal hexameric ring with the proposed subunit order MCM2-MCM6-MCM4-MCM7-MCM3-MCM5. Component of the CMG helicase complex, a hexameric ring of related MCM2-7 subunits stabilized by CDC45 and the tetrameric GINS complex. May interact with MCM10. Interacts with TIPIN. Interacts with CDT1. Interacts with MCMBP. Interacts with DDI2. O-glycosylated (O-GlcNAcylated), in a cell cycle-dependent manner.

It localises to the nucleus. The protein localises to the chromosome. It carries out the reaction ATP + H2O = ADP + phosphate + H(+). Its function is as follows. Acts as a component of the MCM2-7 complex (MCM complex) which is the replicative helicase essential for 'once per cell cycle' DNA replication initiation and elongation in eukaryotic cells. Core component of CDC45-MCM-GINS (CMG) helicase, the molecular machine that unwinds template DNA during replication, and around which the replisome is built. The active ATPase sites in the MCM2-7 ring are formed through the interaction surfaces of two neighboring subunits such that a critical structure of a conserved arginine finger motif is provided in trans relative to the ATP-binding site of the Walker A box of the adjacent subunit. The six ATPase active sites, however, are likely to contribute differentially to the complex helicase activity. The chain is DNA replication licensing factor MCM6 (Mcm6) from Mus musculus (Mouse).